The sequence spans 763 residues: Phosphoglycerol transferase I (763 aa).

4 helical membrane-spanning segments follow: residues Leu4–Trp19, Trp26–Ser48, Tyr76–Leu98, and Pro105–Ala127.

Belongs to the OpgB family.

The protein resides in the cell inner membrane. The catalysed reaction is a phosphatidylglycerol + a membrane-derived-oligosaccharide D-glucose = a 1,2-diacyl-sn-glycerol + a membrane-derived-oligosaccharide 6-(glycerophospho)-D-glucose.. It participates in glycan metabolism; osmoregulated periplasmic glucan (OPG) biosynthesis. Its function is as follows. Transfers a phosphoglycerol residue from phosphatidylglycerol to the membrane-bound nascent glucan backbones. The sequence is that of Phosphoglycerol transferase I from Escherichia coli O6:H1 (strain CFT073 / ATCC 700928 / UPEC).